The chain runs to 724 residues: Probable serine/threonine-protein kinase KKQ8 (724 aa).

2 disordered regions span residues 1-81 and 93-188; these read MVMQ…RQRS and HPFR…KDIL. Phosphoserine is present on serine 19. Residues 45–54 are compositionally biased toward low complexity; sequence PYRSSSTSPK. A compositionally biased stretch (polar residues) spans 95–106; the sequence is FRQTGSGASNSP. Residues 143–162 show a composition bias toward low complexity; sequence RSSSVSSCDSSNGTTSSSDS. Phosphoserine occurs at positions 232, 238, and 241. Composition is skewed to polar residues over residues 318–329 and 338–351; these read NASSLLPNVEKS and GQSPNDSNRSSPTQ. The tract at residues 318–355 is disordered; it reads NASSLLPNVEKSQTNHEKRTGQSPNDSNRSSPTQGRED. In terms of domain architecture, Protein kinase spans 412–712; it reads GHPVGLVGAG…VGKLLDMQWM (301 aa). ATP is bound by residues 418-426 and lysine 455; that span reads VGAGAYGEV. The active-site Proton acceptor is the aspartate 563.

It belongs to the protein kinase superfamily. CAMK Ser/Thr protein kinase family. NPR/HAL subfamily. HAL5 sub-subfamily.

The protein localises to the cytoplasm. It carries out the reaction L-seryl-[protein] + ATP = O-phospho-L-seryl-[protein] + ADP + H(+). The catalysed reaction is L-threonyl-[protein] + ATP = O-phospho-L-threonyl-[protein] + ADP + H(+). This chain is Probable serine/threonine-protein kinase KKQ8 (KKQ8), found in Saccharomyces cerevisiae (strain YJM789) (Baker's yeast).